The primary structure comprises 157 residues: Endoribonuclease YbeY (157 aa).

The Zn(2+) site is built by histidine 123, histidine 127, and histidine 133.

It belongs to the endoribonuclease YbeY family. Zn(2+) serves as cofactor.

The protein localises to the cytoplasm. In terms of biological role, single strand-specific metallo-endoribonuclease involved in late-stage 70S ribosome quality control and in maturation of the 3' terminus of the 16S rRNA. The protein is Endoribonuclease YbeY of Desulfitobacterium hafniense (strain Y51).